Consider the following 73-residue polypeptide: Arabinogalactan protein 16 (73 aa).

An N-terminal signal peptide occupies residues 1-26; sequence MASRNSVTGFALFSFVFAVILSLAGA. Pyrrolidone carboxylic acid is present on Gln27. Residues Pro31, Pro33, and Pro35 each carry the 4-hydroxyproline modification. Residues Pro31, Pro33, and Pro35 are each glycosylated (O-linked (Ara...) hydroxyproline). A lipid anchor (GPI-anchor amidated serine) is attached at Ser37. The propeptide at 38 to 73 is removed in mature form; the sequence is DGTSIDQGIAYLLMVVALVLTYLIHPLDASSSYSFF.

This sequence belongs to the AG-peptide AGP family. Post-translationally, contains 4-hydroxyproline; hydroxylated on Pro-31, Pro-33 and Pro-35. In terms of processing, O-glycosylated on hydroxyprolines; noncontiguous hydroxylproline residues are glycosylated with arabinogalactan. In terms of tissue distribution, predominantly expressed in flowers.

Its subcellular location is the cell membrane. Proteoglycan that seems to be implicated in diverse developmental roles such as differentiation, cell-cell recognition, embryogenesis and programmed cell death. This chain is Arabinogalactan protein 16, found in Arabidopsis thaliana (Mouse-ear cress).